A 151-amino-acid polypeptide reads, in one-letter code: Flagellar assembly factor FliW 2 (151 aa).

It belongs to the FliW family. In terms of assembly, interacts with translational regulator CsrA and flagellin(s).

It is found in the cytoplasm. Functionally, acts as an anti-CsrA protein, binds CsrA and prevents it from repressing translation of its target genes, one of which is flagellin. Binds to flagellin and participates in the assembly of the flagellum. This Desulfotalea psychrophila (strain LSv54 / DSM 12343) protein is Flagellar assembly factor FliW 2.